A 463-amino-acid polypeptide reads, in one-letter code: MDFLPLFCQLQHKPVLIVGGGEVAVRKARLLLDAKARVTINAPHLEPQLMSWAEQGLLTVCAADFHPELLDGKWLVIAATNQPEVNQQVFNEANRRQIFCNVVDSPAHCSAIMPAIIDRSPLMVAISSAGSAPLLSRQLREKIEALLPQHLGQLATLAGKLRERVKAIPDKLARRRFWERLFSHERLACQLARGQQQAAEESVAELLNEPQQSKGSVTLVGAGPGDAGLLTLNGLQQLQQADVVVYDRLVSQEVLAHVRRDAERIFVGKEAGCHCVPQQAINQLLLEQARLGKQVVRLKGGDPFIFGRGGEELETLAEAGIPFSVVPGITAASGCAAYSGIPLTHRDHAQRVQFITGHDKEGNIAQEWPALATPRQTLVFYMGLAHAGRIQDELQTHGLPGHTPVALVEQGTRLQQRVVRGKLQQLAQLATQVESPSLIIIGSVVTLADKLDWYGEANTLAGV.

A precorrin-2 dehydrogenase /sirohydrochlorin ferrochelatase region spans residues Met-1–Val-203. NAD(+) contacts are provided by residues Glu-22–Val-23 and Pro-43–His-44. Ser-128 is subject to Phosphoserine. A uroporphyrinogen-III C-methyltransferase region spans residues Gly-215–Val-463. Pro-224 contributes to the S-adenosyl-L-methionine binding site. Asp-247 functions as the Proton acceptor in the catalytic mechanism. Catalysis depends on Lys-269, which acts as the Proton donor. Residues Gly-300–Asp-302, Ile-305, Thr-330–Ala-331, Met-382, and Gly-411 each bind S-adenosyl-L-methionine.

In the N-terminal section; belongs to the precorrin-2 dehydrogenase / sirohydrochlorin ferrochelatase family. The protein in the C-terminal section; belongs to the precorrin methyltransferase family.

It catalyses the reaction uroporphyrinogen III + 2 S-adenosyl-L-methionine = precorrin-2 + 2 S-adenosyl-L-homocysteine + H(+). It carries out the reaction precorrin-2 + NAD(+) = sirohydrochlorin + NADH + 2 H(+). The catalysed reaction is siroheme + 2 H(+) = sirohydrochlorin + Fe(2+). It participates in cofactor biosynthesis; adenosylcobalamin biosynthesis; precorrin-2 from uroporphyrinogen III: step 1/1. Its pathway is cofactor biosynthesis; adenosylcobalamin biosynthesis; sirohydrochlorin from precorrin-2: step 1/1. It functions in the pathway porphyrin-containing compound metabolism; siroheme biosynthesis; precorrin-2 from uroporphyrinogen III: step 1/1. The protein operates within porphyrin-containing compound metabolism; siroheme biosynthesis; siroheme from sirohydrochlorin: step 1/1. It participates in porphyrin-containing compound metabolism; siroheme biosynthesis; sirohydrochlorin from precorrin-2: step 1/1. In terms of biological role, multifunctional enzyme that catalyzes the SAM-dependent methylations of uroporphyrinogen III at position C-2 and C-7 to form precorrin-2 via precorrin-1. Then it catalyzes the NAD-dependent ring dehydrogenation of precorrin-2 to yield sirohydrochlorin. Finally, it catalyzes the ferrochelation of sirohydrochlorin to yield siroheme. The polypeptide is Siroheme synthase 1 (Aeromonas hydrophila subsp. hydrophila (strain ATCC 7966 / DSM 30187 / BCRC 13018 / CCUG 14551 / JCM 1027 / KCTC 2358 / NCIMB 9240 / NCTC 8049)).